Consider the following 221-residue polypeptide: Epididymal secretory glutathione peroxidase (221 aa).

The signal sequence occupies residues 1 to 21 (MAIQLRVFYLVPLLLASYVQT). Cys-73 is an active-site residue.

This sequence belongs to the glutathione peroxidase family. In terms of tissue distribution, epididymis.

Its subcellular location is the secreted. It catalyses the reaction 2 glutathione + H2O2 = glutathione disulfide + 2 H2O. In terms of biological role, protects cells and enzymes from oxidative damage, by catalyzing the reduction of hydrogen peroxide, lipid peroxides and organic hydroperoxide, by glutathione. May constitute a glutathione peroxidase-like protective system against peroxide damage in sperm membrane lipids. In Rattus norvegicus (Rat), this protein is Epididymal secretory glutathione peroxidase (Gpx5).